The primary structure comprises 276 residues: MGIRLYKAYTPGTRNRSVLEFNDITKTNPEKSLTYHRHRSKGRNNRGIITIRHRGGGHKRLCRLIDFTREKNIPATVASIEYDPNRNCRIALLYYKNGIKRYIIHPRGLSVGKEIVSSVEAPLSVGNSLPLNKIPLGTGIHNIELSPGQGGQLARAAGAVAQLIAKEGKFVTVRLPSGEVRLILKECWATIGQVGNVDANNITIGKAGRTRWLGKRPVVRGVVMNPVDHPHGGGEGRSPIGRPKPVSPWGKTALGAKTRKRKKYSDVLIIRRRKSA.

Positions 225 to 256 (NPVDHPHGGGEGRSPIGRPKPVSPWGKTALGA) are disordered.

Belongs to the universal ribosomal protein uL2 family. Part of the 50S ribosomal subunit.

Its subcellular location is the plastid. The protein resides in the chloroplast. This chain is Large ribosomal subunit protein uL2c (rpl2), found in Mesostigma viride (Green alga).